A 461-amino-acid polypeptide reads, in one-letter code: MSPSRSEPLIDNLVDRSNLKIVALASPADGHTFPLLRIVEELVLRGYDVTFLASEDYRARTAAVGAYFVPVPPYDDIQRITTELSVIADPGERMNAAMIELFITPTAGRMATLYAALEDVKREKPLHKVVLLTESFFLGDHPLFLGAPLPKGFTRRPRAINIHACSYGLSSVDSAPFGLTIIPDGTAESREKYRKLHSDMLTGSLAESVALQKKVLTELGATNMDEVEGRNPLDVIATTADVTLQMCPPSLEYRRSDIHPKVRFIGALPPRAPPKTFSAPPFWNTVINGSKRVVVVSQGTVAVRYDQLLVPAMHALADRDDIVVVAILGQKGAELPGEVAIPSNAYTVDYLSYDAMLPYASVFVLNAGYGGFMHGIVNGVPMVLAGGSEDKPEVANRGEFAGVGINLRTGTPSQRQIRQGVDEILSNPKYKRRVKEIQLENEKMKAMDSVEKEILKWAAMD.

It belongs to the UDP-glycosyltransferase family.

It participates in secondary metabolite biosynthesis. Its function is as follows. UDP-glucosyltransferase; part of the pathway that mediates the biosynthesis of tenellin-type 2-pyridones, iron-chelating compounds involved in iron stress tolerance, competition with the natural competitor fungus Metarhizium robertsii and insect hosts infection. Targets the N-OH hydroxyl residue of 15-hydroxytellenin (15-HT) to produce pyridovericin-N-O-(beta-D-glucopyranoside) which is further methylated by the methyltransferase MT1 to yield pyridovericin-N-O-(4-O-methyl-beta-D-glucopyranoside) (PMGP). The pathway begins with the assembly of the polyketide-amino acid backbone by the hybrid PKS-NRPS tenS with the help of the enoyl reductase tenC. These enzymes catalyze the synthesis of the pyrrolidine-2-dione intermediates pretellinin A, 11-hydropretellenin A, 12-hydropretellenin A, 13-hydropretellenin A, 14-hydropretellenin A, 12-oxopretellenin A and prototellinin D. The cytochrome P450 monooxygenase tenA then catalyzes an oxidative ring expansion of pretenellin A and 14-hydropretellenin A to form the 2-pyridone core, leading to pretenellin B and pyridovericin, respectively. The cytochrome P450 monooxygenase tenB is then required for the selective N-hydroxylation of the 2-pyridone nitrogen of yield tellinin and 15-hydroxytellenin (15-HT), respectively. The UDP-glucosyltransferase GT1 and the methyltransferase MT1, located outside the tenS gene cluster, contribute to the stepwise glycosylation and methylation of 15-HT to obtain the glycoside pyridovericin-N-O-(4-O-methyl-beta-D-glucopyranoside) (PMGP). Additional related compounds such as 1-O-methyl-15-HT, (8Z)-1-O-methyl-15-HT, and O-methyltenellin A are also produced but the enzymes involved in their biosynthesis have still to be determined. The sequence is that of UDP-glucosyltransferase 1 from Beauveria bassiana (strain ARSEF 2860) (White muscardine disease fungus).